Consider the following 284-residue polypeptide: tRNA uridine(34) hydroxylase (284 aa).

One can recognise a Rhodanese domain in the interval 132-226 (TGRPVVMLDT…YFEEVGGAHY (95 aa)). Cys186 (cysteine persulfide intermediate) is an active-site residue.

The protein belongs to the TrhO family.

The catalysed reaction is uridine(34) in tRNA + AH2 + O2 = 5-hydroxyuridine(34) in tRNA + A + H2O. Catalyzes oxygen-dependent 5-hydroxyuridine (ho5U) modification at position 34 in tRNAs. The protein is tRNA uridine(34) hydroxylase of Burkholderia lata (strain ATCC 17760 / DSM 23089 / LMG 22485 / NCIMB 9086 / R18194 / 383).